Consider the following 588-residue polypeptide: Tripartite motif-containing protein 29 (588 aa).

The segment at 1-66 (MEAADASRSN…GSALKPGEGR (66 aa)) is disordered. A phosphoserine mark is found at Ser21, Ser28, Ser58, and Ser104. Tyr106 carries the post-translational modification Phosphotyrosine. A B box-type zinc finger spans residues 220–260 (FEARKCPVHGKTMELFCQTDQTCICYLCMFQEHKNHSTVTV). Positions 225, 228, 247, and 252 each coordinate Zn(2+). Positions 259 to 352 (TVEEAKAEKE…VKVIMDALDE (94 aa)) form a coiled coil. A Phosphothreonine modification is found at Thr476. Ser489 is modified (phosphoserine).

Interacts with VIM and HINT1. Interacts with IKBKG/NEMO. Interacts with STING1. In terms of processing, constitutively phosphorylated by PKC on serine/threonine in A431 cells. Expressed in placenta, prostate and thymus.

The protein localises to the cytoplasm. The protein resides in the lysosome. Plays a crucial role in the regulation of macrophage activation in response to viral or bacterial infections within the respiratory tract. Mechanistically, TRIM29 interacts with IKBKG/NEMO in the lysosome where it induces its 'Lys-48' ubiquitination and subsequent degradation. In turn, the expression of type I interferons and the production of pro-inflammatory cytokines are inhibited. Additionally, induces the 'Lys-48' ubiquitination of STING1 in a similar way, leading to its degradation. In Homo sapiens (Human), this protein is Tripartite motif-containing protein 29 (TRIM29).